The sequence spans 489 residues: Rhamnulokinase (489 aa).

13-17 (ASSGR) contacts ATP. Cysteine 68 and cysteine 222 form a disulfide bridge. Residues glycine 83 and 236-238 (HDT) each bind substrate. Aspartate 237 acts as the Proton acceptor in catalysis. Threonine 259 provides a ligand contact to ATP. Residue asparagine 296 coordinates substrate. Glutamine 304 is a binding site for ATP. A disulfide bond links cysteine 353 and cysteine 370. Residue glycine 402 participates in ATP binding. Cysteines 413 and 417 form a disulfide.

It belongs to the rhamnulokinase family. In terms of assembly, monomer. The cofactor is Mg(2+).

The enzyme catalyses L-rhamnulose + ATP = L-rhamnulose 1-phosphate + ADP + H(+). It functions in the pathway carbohydrate degradation; L-rhamnose degradation; glycerone phosphate from L-rhamnose: step 2/3. Functionally, involved in the catabolism of L-rhamnose (6-deoxy-L-mannose). Catalyzes the transfer of the gamma-phosphate group from ATP to the 1-hydroxyl group of L-rhamnulose to yield L-rhamnulose 1-phosphate. In Escherichia coli (strain 55989 / EAEC), this protein is Rhamnulokinase.